Here is a 173-residue protein sequence, read N- to C-terminus: Protein FAM180A (173 aa).

The first 17 residues, 1 to 17 (MHWKMLLLLLLYYNAEA), serve as a signal peptide directing secretion.

Belongs to the FAM180 family.

The protein resides in the secreted. This is Protein FAM180A (FAM180A) from Homo sapiens (Human).